The following is a 209-amino-acid chain: Probable nicotinate-nucleotide adenylyltransferase (209 aa).

Belongs to the NadD family.

It carries out the reaction nicotinate beta-D-ribonucleotide + ATP + H(+) = deamido-NAD(+) + diphosphate. It participates in cofactor biosynthesis; NAD(+) biosynthesis; deamido-NAD(+) from nicotinate D-ribonucleotide: step 1/1. Functionally, catalyzes the reversible adenylation of nicotinate mononucleotide (NaMN) to nicotinic acid adenine dinucleotide (NaAD). In Hydrogenovibrio crunogenus (strain DSM 25203 / XCL-2) (Thiomicrospira crunogena), this protein is Probable nicotinate-nucleotide adenylyltransferase.